The sequence spans 365 residues: Alanine racemase (365 aa).

Lys-32 serves as the catalytic Proton acceptor; specific for D-alanine. Residue Lys-32 is modified to N6-(pyridoxal phosphate)lysine. Residue Arg-128 participates in substrate binding. The active-site Proton acceptor; specific for L-alanine is the Tyr-257. Met-305 is a binding site for substrate.

Belongs to the alanine racemase family. Pyridoxal 5'-phosphate serves as cofactor.

The enzyme catalyses L-alanine = D-alanine. It functions in the pathway amino-acid biosynthesis; D-alanine biosynthesis; D-alanine from L-alanine: step 1/1. Functionally, catalyzes the interconversion of L-alanine and D-alanine. May also act on other amino acids. The polypeptide is Alanine racemase (alr) (Francisella tularensis subsp. tularensis (strain SCHU S4 / Schu 4)).